The following is a 362-amino-acid chain: MECSTAIYSLANALGPLKLDSTAPNNSHRTIKAENYFNEDEEDYNENSHEDSEDSKEDSDGQGCRSRKRKEKPPFSYIALIAMAISKRPDKKATLAEIYSYLQENFEFFRGEYAGWRNSIRHNLSLNECFVKLPKDTGESYRGRKGHKWTISDSCEFMLEENGFRRRPRGYKARKRTHFPGVTASNEMGIGGATFDYPSSTTELTDSGTSSLNTDVKNILLNGGEDFGPSISDQLVSSTTSAVLPSLNGPDQSPIYPNYFGYGTAEFPMQWASPTYDWPYYATPHIGLCSSDFPGISPSPTVTPQVSPYFYPPAITTASSFMDDWRFGVSSAAVGAYDSSASFLAAETTAGDVAIPQDLSDC.

The interval 19-70 (LDSTAPNNSHRTIKAENYFNEDEEDYNENSHEDSEDSKEDSDGQGCRSRKRK) is disordered. The span at 37 to 57 (FNEDEEDYNENSHEDSEDSKE) shows a compositional bias: acidic residues. The fork-head DNA-binding region spans 72–169 (KPPFSYIALI…EENGFRRRPR (98 aa)).

It is found in the nucleus. Its function is as follows. Transcription factor that is required for cell fate of coelomocytes which are non-muscle mesodermal cells. Acts in concert with, and by activating expression of, the homeodomain gene ceh-34. Binds to the sequence motif 5'-ATAAA[T/C]A-3'. The chain is Forkhead box protein F from Caenorhabditis elegans.